A 335-amino-acid chain; its full sequence is MDVVLDVLDTFVFDKLYALLLPAKSFDLLDQDSVVDYNSHINRYVTLTPSQYAVESSLARDNILRQFLSLFITIWAFGLLLYLTTASLSFALVFDKRAMQHPKFLRHQIRLEIGQALRAMPVMAALTAPLFLAEVRGYSKLYDFPTGSPFPLYTYLQYPLFIAFTDFAIYWIHRGLHHPAIYKRLHKPHHRWIISTPYASYAFHPVDGWCQSLPYHVYPFLFPLQKAAYLGLFVFVTIWTVMIHDGEYALDSPVINGSACHTIHHYYFNYNYGQFITFWDRIGGSYRRPNRELFDKQQRLQQTEIQRQVEEMERLVKEVEGSDDRCYEQDTKKTS.

3 consecutive transmembrane segments (helical) span residues 74 to 94 (IWAF…ALVF), 113 to 133 (IGQA…LFLA), and 152 to 172 (LYTY…IYWI). A Fatty acid hydroxylase domain is found at 160–284 (LFIAFTDFAI…FITFWDRIGG (125 aa)). Residues 173 to 177 (HRGLH) carry the Histidine box-1 motif. A Histidine box-2 motif is present at residues 186 to 190 (HKPHH). The helical transmembrane segment at 219–239 (PFLFPLQKAAYLGLFVFVTIW) threads the bilayer. N-linked (GlcNAc...) asparagine glycosylation is present at Asn256. Residues 261 to 265 (HTIHH) carry the Histidine box-3 motif.

Belongs to the sterol desaturase family. It depends on Fe cation as a cofactor.

It localises to the endoplasmic reticulum membrane. The protein operates within steroid metabolism; ergosterol biosynthesis. In terms of biological role, delta(7)-sterol 5(6)-desaturase; part of the third module of ergosterol biosynthesis pathway that includes the late steps of the pathway. Erg3B catalyzes the introduction of a C-5 double bond in the B ring to produce 5-dehydroepisterol. The third module or late pathway involves the ergosterol synthesis itself through consecutive reactions that mainly occur in the endoplasmic reticulum (ER) membrane. Firstly, the squalene synthase erg9 catalyzes the condensation of 2 farnesyl pyrophosphate moieties to form squalene, which is the precursor of all steroids. Squalene synthase is crucial for balancing the incorporation of farnesyl diphosphate (FPP) into sterol and nonsterol isoprene synthesis. Secondly, squalene is converted into lanosterol by the consecutive action of the squalene epoxidase erg1 and the lanosterol synthase erg7. Then, the delta(24)-sterol C-methyltransferase erg6 methylates lanosterol at C-24 to produce eburicol. Eburicol is the substrate of the sterol 14-alpha demethylase encoded by cyp51A and cyp51B, to yield 4,4,24-trimethyl ergosta-8,14,24(28)-trienol. The C-14 reductase erg24 then reduces the C14=C15 double bond which leads to 4,4-dimethylfecosterol. A sequence of further demethylations at C-4, involving the C-4 demethylation complex containing the C-4 methylsterol oxidases erg25A or erg25B, the sterol-4-alpha-carboxylate 3-dehydrogenase erg26 and the 3-keto-steroid reductase erg27, leads to the production of fecosterol via 4-methylfecosterol. The C-8 sterol isomerase erg2 then catalyzes the reaction which results in unsaturation at C-7 in the B ring of sterols and thus converts fecosterol to episterol. The sterol-C5-desaturase erg3B then catalyzes the introduction of a C-5 double bond in the B ring to produce 5-dehydroepisterol. The 2 other sterol-C5-desaturases, erg3A and erg3C, seem to be less important in ergosterol biosynthesis. The C-22 sterol desaturase erg5 further converts 5-dehydroepisterol into ergosta-5,7,22,24(28)-tetraen-3beta-ol by forming the C-22(23) double bond in the sterol side chain. Finally, ergosta-5,7,22,24(28)-tetraen-3beta-ol is substrate of the C-24(28) sterol reductases erg4A and erg4B to produce ergosterol. Possible alternative sterol biosynthetic pathways might exist from fecosterol to ergosterol, depending on the activities of the erg3 isoforms. This is Delta(7)-sterol 5(6)-desaturase erg3B from Aspergillus fumigatus (strain ATCC MYA-4609 / CBS 101355 / FGSC A1100 / Af293) (Neosartorya fumigata).